The primary structure comprises 334 residues: Glyceraldehyde-3-phosphate dehydrogenase (334 aa).

NAD(+)-binding positions include 12–13 and glycine 111; that span reads TI. Residue 140 to 142 participates in D-glyceraldehyde 3-phosphate binding; the sequence is SCN. Cysteine 141 (nucleophile) is an active-site residue. Arginine 167 is an NAD(+) binding site. 192–193 contacts D-glyceraldehyde 3-phosphate; sequence HG. Position 298 (glutamine 298) interacts with NAD(+).

The protein belongs to the glyceraldehyde-3-phosphate dehydrogenase family. Homotetramer.

It is found in the cytoplasm. It catalyses the reaction D-glyceraldehyde 3-phosphate + phosphate + NADP(+) = (2R)-3-phospho-glyceroyl phosphate + NADPH + H(+). The catalysed reaction is D-glyceraldehyde 3-phosphate + phosphate + NAD(+) = (2R)-3-phospho-glyceroyl phosphate + NADH + H(+). It functions in the pathway carbohydrate degradation; glycolysis; pyruvate from D-glyceraldehyde 3-phosphate: step 1/5. The chain is Glyceraldehyde-3-phosphate dehydrogenase from Thermococcus onnurineus (strain NA1).